Consider the following 148-residue polypeptide: MANVLIVYGSTTGNTAWVAETVGRDIAEAGHSVEIRDAGQVEAEGLCEGRDLVLFGCSTWGDDEIELQDDFIHLYESLEATGAGKGRAACFGCGDSSYTYFCGAVDAIEERLSGLGADIVADSLKIDGDPRTMRDDVSAWAGRVVTAL.

Residues valine 4–valine 145 form the Flavodoxin-like domain.

Belongs to the flavodoxin family. FMN serves as cofactor.

In terms of biological role, low-potential electron donor to a number of redox enzymes. The chain is Flavodoxin from Nitratidesulfovibrio vulgaris (strain DSM 19637 / Miyazaki F) (Desulfovibrio vulgaris).